We begin with the raw amino-acid sequence, 361 residues long: Peptide chain release factor 1 (361 aa).

Gln237 is subject to N5-methylglutamine.

Belongs to the prokaryotic/mitochondrial release factor family. Methylated by PrmC. Methylation increases the termination efficiency of RF1.

It localises to the cytoplasm. In terms of biological role, peptide chain release factor 1 directs the termination of translation in response to the peptide chain termination codons UAG and UAA. This Chromohalobacter salexigens (strain ATCC BAA-138 / DSM 3043 / CIP 106854 / NCIMB 13768 / 1H11) protein is Peptide chain release factor 1.